The chain runs to 323 residues: Probable cell division protein WhiA (323 aa).

The H-T-H motif DNA-binding region spans 279–313 (TLKELGEMVSGGKISKSGINHRLRKLDEIAERLRA).

Belongs to the WhiA family.

In terms of biological role, involved in cell division and chromosome segregation. The chain is Probable cell division protein WhiA from Anoxybacillus flavithermus (strain DSM 21510 / WK1).